The primary structure comprises 62 residues: Large ribosomal subunit protein bL32 (62 aa).

Positions M1–R16 are enriched in basic residues. The segment at M1–L44 is disordered. Basic and acidic residues predominate over residues V28–L44.

The protein belongs to the bacterial ribosomal protein bL32 family.

This is Large ribosomal subunit protein bL32 from Methylorubrum extorquens (strain CM4 / NCIMB 13688) (Methylobacterium extorquens).